We begin with the raw amino-acid sequence, 469 residues long: Glutamine synthetase (469 aa).

The region spanning 14–99 is the GS beta-grasp domain; sequence NDVKFVDLRF…VCDILDPVSG (86 aa). One can recognise a GS catalytic domain in the interval 106–469; that stretch reads RRGTAKKAEA…PVEYDMYYSA (364 aa). Mg(2+) contacts are provided by Glu-131 and Glu-133. Glu-209 contacts ATP. Mg(2+) is bound by residues Glu-214 and Asp-221. L-glutamate contacts are provided by residues 265–266 and Gly-266; that span reads NG. A Mg(2+)-binding site is contributed by His-270. ATP is bound by residues 272–274 and Ser-274; that span reads HQS. Residues Arg-322, Glu-328, and Arg-340 each contribute to the L-glutamate site. The ATP site is built by Arg-340, Arg-345, and Lys-353. Glu-358 is a binding site for Mg(2+). Residue Arg-360 coordinates L-glutamate. An O-AMP-tyrosine modification is found at Tyr-398.

The protein belongs to the glutamine synthetase family. As to quaternary structure, oligomer of 12 subunits arranged in the form of two hexameric ring. Mg(2+) serves as cofactor.

Its subcellular location is the cytoplasm. The enzyme catalyses L-glutamate + NH4(+) + ATP = L-glutamine + ADP + phosphate + H(+). Its activity is regulated as follows. The activity of this enzyme could be controlled by adenylation under conditions of abundant glutamine. Its function is as follows. Catalyzes the ATP-dependent biosynthesis of glutamine from glutamate and ammonia. This is Glutamine synthetase from Rhizobium leguminosarum bv. viciae.